A 259-amino-acid polypeptide reads, in one-letter code: Dickkopf-related protein 2 (259 aa).

A signal peptide spans 1–33; sequence MAALMRSKDSSCCLLLLAAVLMVESSQIGSSRA. Residue Asn-52 is glycosylated (N-linked (GlcNAc...) asparagine). Residues 78–127 are DKK-type Cys-1; the sequence is CSSDKECEVGRYCHSPHQGSSACMVCRRKKKRCHRDGMCCPSTRCNNGIC. 5 disulfide bridges follow: Cys-183–Cys-195, Cys-189–Cys-204, Cys-194–Cys-231, Cys-214–Cys-239, and Cys-233–Cys-256. Residues 183–256 are DKK-type Cys-2; it reads CLRSSDCIEG…YSSKARLHVC (74 aa).

Belongs to the dickkopf family. In terms of assembly, interacts with LRP5 and LRP6. Post-translationally, may be proteolytically processed by a furin-like protease. As to expression, expressed in heart, brain, skeletal muscle and lung.

It is found in the secreted. In terms of biological role, antagonizes canonical Wnt signaling by inhibiting LRP5/6 interaction with Wnt and by forming a ternary complex with the transmembrane protein KREMEN that promotes internalization of LRP5/6. DKKs play an important role in vertebrate development, where they locally inhibit Wnt regulated processes such as antero-posterior axial patterning, limb development, somitogenesis and eye formation. In the adult, Dkks are implicated in bone formation and bone disease, cancer and Alzheimer disease. This Homo sapiens (Human) protein is Dickkopf-related protein 2 (DKK2).